The sequence spans 726 residues: Tripartite terminase subunit 1 (726 aa).

Residues 189-217 (CMKCYEELTLTPNQGKSLRRRLHGKFCNH) form a C3H1-type zinc finger. 626–633 (YNDVFGKR) contacts ATP.

It belongs to the herpesviridae TRM1 protein family. In terms of assembly, associates with TRM2 and TRM3 to form the tripartite terminase complex. Interacts with portal protein.

It is found in the host nucleus. Component of the molecular motor that translocates viral genomic DNA in empty capsid during DNA packaging. Forms a tripartite terminase complex together with TRM2 and TRM3 in the host cytoplasm. Once the complex reaches the host nucleus, it interacts with the capsid portal vertex. This portal forms a ring in which genomic DNA is translocated into the capsid. TRM1 carries an endonuclease activity that plays an important role for the cleavage of concatemeric viral DNA into unit length genomes. This chain is Tripartite terminase subunit 1, found in Homo sapiens (Human).